Here is a 705-residue protein sequence, read N- to C-terminus: SPbeta prophage-derived sublancin-168-processing and transport ATP-binding protein SunT (705 aa).

Positions 12 to 138 (QFNSHDCGLA…SKFTNFILEI (127 aa)) constitute a Peptidase C39 domain. C18 is an active-site residue. 6 helical membrane-spanning segments follow: residues 167–187 (IVFVILLTSLFVVGLAVAGSF), 205–225 (LITITLIFISMVLIRCIFDFV), 281–301 (ANFVTAIIDIILILGLGVILY), 306–326 (ILFLTIILPILLLSCLAILFF), 388–408 (VISNEILKGLIQNSFTIIILW), and 418–438 (SMSLGTLLFINTLAAFLLSSL). One can recognise an ABC transmembrane type-1 domain in the interval 168–450 (VFVILLTSLF…ILSMQSDLQQ (283 aa)). An ABC transporter domain is found at 483–705 (IKTVNLNIGA…SYSENKEYSI (223 aa)). 516–523 (GESGTGKS) serves as a coordination point for ATP.

It belongs to the ABC transporter superfamily. SunT family. As to quaternary structure, homodimer.

The protein localises to the cell membrane. In terms of biological role, sunT (TC 3.A.1.112.4) is required for production of the lantibiotic sublancin-168, probably by both processing the signal peptide and exporting the resulting mature lantibiotic. The sequence is that of SPbeta prophage-derived sublancin-168-processing and transport ATP-binding protein SunT (sunT) from Bacillus subtilis (strain 168).